An 827-amino-acid chain; its full sequence is Multiple RNA-binding domain-containing protein 1 (827 aa).

The 74-residue stretch at 5–78 folds into the RRM 1 domain; that stretch reads SRIFVKNLPP…SRISVDIAKP (74 aa). Disordered stretches follow at residues 77-116, 176-230, and 256-299; these read KPIADSKPQHKSPSKGSSKDADPKNAPKVLPPNTKVTAAA, AGLE…ATDD, and AASG…DPES. The segment covering 179–189 has biased composition (acidic residues); the sequence is EDGESDDEYED. 2 stretches are compositionally biased toward low complexity: residues 208-225 and 256-270; these read APLAASAEPSESAPPVSL and AASGSAAVSVPSTSV. The segment covering 277–288 has biased composition (basic and acidic residues); the sequence is KPEEHPAEDSRE. RRM domains lie at 308 to 384, 489 to 560, 599 to 682, and 704 to 781; these read SRLF…PAAA, TTIL…KGPK, SSLF…ASHR, and TKLV…FAQA.

It belongs to the RRM MRD1 family.

Its subcellular location is the nucleus. Functionally, involved in pre-rRNA processing. The sequence is that of Multiple RNA-binding domain-containing protein 1 (mrd-1) from Neurospora crassa (strain ATCC 24698 / 74-OR23-1A / CBS 708.71 / DSM 1257 / FGSC 987).